Consider the following 224-residue polypeptide: 7-cyano-7-deazaguanine synthase 1 (224 aa).

10 to 20 (LSGGLDSMVCA) serves as a coordination point for ATP. Residues C189, C199, C202, and C205 each contribute to the Zn(2+) site.

This sequence belongs to the QueC family. Requires Zn(2+) as cofactor.

It catalyses the reaction 7-carboxy-7-deazaguanine + NH4(+) + ATP = 7-cyano-7-deazaguanine + ADP + phosphate + H2O + H(+). The protein operates within purine metabolism; 7-cyano-7-deazaguanine biosynthesis. Its function is as follows. Catalyzes the ATP-dependent conversion of 7-carboxy-7-deazaguanine (CDG) to 7-cyano-7-deazaguanine (preQ(0)). This chain is 7-cyano-7-deazaguanine synthase 1, found in Sphingopyxis alaskensis (strain DSM 13593 / LMG 18877 / RB2256) (Sphingomonas alaskensis).